The primary structure comprises 623 residues: UvrABC system protein C (623 aa).

One can recognise a GIY-YIG domain in the interval 12–91 (PSPGVYLMKS…IKQHRPKYNI (80 aa)). A UVR domain is found at 201–236 (TEVARLYRSKMNLAAEQMRYEDAARYRDLLRAIEVT). The interval 603-623 (RLHGSPLPNPPPPGEGAMDRK) is disordered.

This sequence belongs to the UvrC family. As to quaternary structure, interacts with UvrB in an incision complex.

Its subcellular location is the cytoplasm. Its function is as follows. The UvrABC repair system catalyzes the recognition and processing of DNA lesions. UvrC both incises the 5' and 3' sides of the lesion. The N-terminal half is responsible for the 3' incision and the C-terminal half is responsible for the 5' incision. This Citrifermentans bemidjiense (strain ATCC BAA-1014 / DSM 16622 / JCM 12645 / Bem) (Geobacter bemidjiensis) protein is UvrABC system protein C.